The chain runs to 308 residues: Ornithine carbamoyltransferase (308 aa).

Carbamoyl phosphate contacts are provided by residues 56-59, Gln83, Arg107, and 134-137; these read STRT and HPCQ. Residues Asn165, Asp225, and 229 to 230 contribute to the L-ornithine site; that span reads SM. Residues 266 to 267 and Arg294 contribute to the carbamoyl phosphate site; that span reads CL.

This sequence belongs to the aspartate/ornithine carbamoyltransferase superfamily. OTCase family.

The protein localises to the cytoplasm. It catalyses the reaction carbamoyl phosphate + L-ornithine = L-citrulline + phosphate + H(+). It participates in amino-acid biosynthesis; L-arginine biosynthesis; L-arginine from L-ornithine and carbamoyl phosphate: step 1/3. Reversibly catalyzes the transfer of the carbamoyl group from carbamoyl phosphate (CP) to the N(epsilon) atom of ornithine (ORN) to produce L-citrulline. In Roseobacter denitrificans (strain ATCC 33942 / OCh 114) (Erythrobacter sp. (strain OCh 114)), this protein is Ornithine carbamoyltransferase.